The following is a 456-amino-acid chain: Argininosuccinate lyase (456 aa).

The protein belongs to the lyase 1 family. Argininosuccinate lyase subfamily.

The protein resides in the cytoplasm. The enzyme catalyses 2-(N(omega)-L-arginino)succinate = fumarate + L-arginine. Its pathway is amino-acid biosynthesis; L-arginine biosynthesis; L-arginine from L-ornithine and carbamoyl phosphate: step 3/3. In Listeria monocytogenes serovar 1/2a (strain ATCC BAA-679 / EGD-e), this protein is Argininosuccinate lyase.